A 207-amino-acid polypeptide reads, in one-letter code: Protein I (207 aa).

This sequence belongs to the coronavirus I protein family.

It is found in the virion. Functionally, structural protein that is not essential for the viral replication either in tissue culture or in its natural host. This is Protein I (N) from Sus scrofa (Pig).